The primary structure comprises 477 residues: MIQVLLVIICLAVPYQGSSIILESGNVNDYEVVYPRKVTALPKGAVQPKYEDAMQYELKVNGEPVVLHLEKNKGLFSKDYIETHYSPDGRKITTNPPVEDHCYYHGRIQNDADSTASISACNGLKGHFKLQGETYLIEPLKLSNSEAHAVYKYEDVEKEDEAPKMCGVTQNWESYEPIKKASQSNLTPAHQRYIELVIVADHGMFTKYDSNLDTIRTWVHELVNSINEFYRSLNIDVSLTELEIWSNEDLINVQPAAPHTLDSFGKWRERDLLHRIHHDNAMLLTAIDFDEPTIGLAYVGTMCNPKGSTGVVQDHSTINLRVAVTMAHEIGHNLGIHHDTGSCSCGGYSCIMSPVISHEPSKYFSDCSYTQCWDFIMNQKPQCILNKPLRTDTVSTPVSGNELLEAGEECDCGSPGNPCCDAATCKLRQGAQCAEGLCCDQCRFMKKGTVCRIARGDDMDDYCNGISAGCPRNPFHA.

The signal sequence occupies residues 1 to 19; sequence MIQVLLVIICLAVPYQGSS. Positions 20 to 186 are excised as a propeptide; the sequence is IILESGNVND…PIKKASQSNL (167 aa). One can recognise a Peptidase M12B domain in the interval 192-388; that stretch reads RYIELVIVAD…QKPQCILNKP (197 aa). 2 residues coordinate Ca(2+): Glu-195 and Asp-279. 3 cysteine pairs are disulfide-bonded: Cys-303–Cys-383, Cys-343–Cys-367, and Cys-345–Cys-350. Zn(2+) is bound at residue His-328. Glu-329 is an active-site residue. Residues His-332 and His-338 each contribute to the Zn(2+) site. Ca(2+) contacts are provided by Cys-383 and Asn-386. Residues 389-404 constitute a propeptide that is removed on maturation; sequence LRTDTVSTPVSGNELL. Positions 396–477 constitute a Disintegrin domain; it reads TPVSGNELLE…AGCPRNPFHA (82 aa). 6 disulfides stabilise this stretch: Cys-410–Cys-425, Cys-412–Cys-420, Cys-419–Cys-442, Cys-433–Cys-439, Cys-438–Cys-463, and Cys-451–Cys-470. The Cell attachment site motif lies at 455–457; it reads RGD.

The protein belongs to the venom metalloproteinase (M12B) family. P-II subfamily. P-IIa sub-subfamily. Monomer. Zn(2+) is required as a cofactor. Expressed by the venom gland.

Its subcellular location is the secreted. Impairs hemostasis in the envenomed animal. In terms of biological role, inhibits platelet aggregation induced by ADP, thrombin, platelet-activating factor and collagen. Acts by inhibiting fibrinogen interaction with platelet receptors GPIIb/GPIIIa (ITGA2B/ITGB3). The protein is Zinc metalloproteinase/disintegrin of Gloydius halys (Chinese water mocassin).